A 241-amino-acid chain; its full sequence is 1-(5-phosphoribosyl)-5-[(5-phosphoribosylamino)methylideneamino] imidazole-4-carboxamide isomerase (241 aa).

Asp8 functions as the Proton acceptor in the catalytic mechanism. Catalysis depends on Asp129, which acts as the Proton donor.

This sequence belongs to the HisA/HisF family.

It is found in the cytoplasm. The catalysed reaction is 1-(5-phospho-beta-D-ribosyl)-5-[(5-phospho-beta-D-ribosylamino)methylideneamino]imidazole-4-carboxamide = 5-[(5-phospho-1-deoxy-D-ribulos-1-ylimino)methylamino]-1-(5-phospho-beta-D-ribosyl)imidazole-4-carboxamide. The protein operates within amino-acid biosynthesis; L-histidine biosynthesis; L-histidine from 5-phospho-alpha-D-ribose 1-diphosphate: step 4/9. This Chloroflexus aggregans (strain MD-66 / DSM 9485) protein is 1-(5-phosphoribosyl)-5-[(5-phosphoribosylamino)methylideneamino] imidazole-4-carboxamide isomerase.